The following is a 705-amino-acid chain: Polyribonucleotide nucleotidyltransferase (705 aa).

2 residues coordinate Mg(2+): aspartate 492 and aspartate 498. The 60-residue stretch at 559–618 folds into the KH domain; sequence PLMITMKVSPDKIRHIIGPGGKIINKIIDETGVEIDIDDDGSVYILAQDQESGNRAKEII. One can recognise an S1 motif domain in the interval 628-696; that stretch reads GDIYEGRVKK…ELGRINLSRK (69 aa).

Belongs to the polyribonucleotide nucleotidyltransferase family. Mg(2+) serves as cofactor.

The protein localises to the cytoplasm. The enzyme catalyses RNA(n+1) + phosphate = RNA(n) + a ribonucleoside 5'-diphosphate. In terms of biological role, involved in mRNA degradation. Catalyzes the phosphorolysis of single-stranded polyribonucleotides processively in the 3'- to 5'-direction. The protein is Polyribonucleotide nucleotidyltransferase of Halothermothrix orenii (strain H 168 / OCM 544 / DSM 9562).